The chain runs to 279 residues: Zinc finger AN1 and C2H2 domain-containing stress-associated protein 11 (279 aa).

2 AN1-type zinc fingers span residues 7-55 (PDLG…REDV) and 95-145 (ATKK…KLPF). Residues C13, C18, C28, C31, C36, H39, H45, C47, C101, C106, C118, C121, C126, H129, H135, and C137 each coordinate Zn(2+). Residues 152–178 (STTRKEAKTTRPNKAHPSTSSSSSSSR) form a disordered region. Residues 169 to 178 (STSSSSSSSR) show a composition bias toward low complexity. C2H2-type zinc fingers lie at residues 213–236 (EVCPQCGAKFSSVTSLVEHVEKTH) and 250–273 (DVCPRCSRGFRDPVDLVNHIERDH).

In terms of biological role, may be involved in environmental stress response. The protein is Zinc finger AN1 and C2H2 domain-containing stress-associated protein 11 (SAP11) of Arabidopsis thaliana (Mouse-ear cress).